The primary structure comprises 113 residues: MKGADAEARAAAWLASLGREVVARNYRIPGGEIDLVSRDGDVLVFTEVRQRHSSRFGTAAESVTPRKLALMRRAALAYLSREHGREDLPCRLEVLTIDGPADRGTLTLLPLDG.

Belongs to the UPF0102 family.

This Deinococcus geothermalis (strain DSM 11300 / CIP 105573 / AG-3a) protein is UPF0102 protein Dgeo_1894.